We begin with the raw amino-acid sequence, 466 residues long: Asparagine--tRNA ligase (466 aa).

This sequence belongs to the class-II aminoacyl-tRNA synthetase family. As to quaternary structure, homodimer.

The protein resides in the cytoplasm. The catalysed reaction is tRNA(Asn) + L-asparagine + ATP = L-asparaginyl-tRNA(Asn) + AMP + diphosphate + H(+). This is Asparagine--tRNA ligase from Escherichia coli O157:H7.